Consider the following 468-residue polypeptide: UDP-N-acetylmuramate--L-alanine ligase (468 aa).

118–124 (GTHGKTT) is a binding site for ATP.

It belongs to the MurCDEF family.

It localises to the cytoplasm. The catalysed reaction is UDP-N-acetyl-alpha-D-muramate + L-alanine + ATP = UDP-N-acetyl-alpha-D-muramoyl-L-alanine + ADP + phosphate + H(+). The protein operates within cell wall biogenesis; peptidoglycan biosynthesis. Cell wall formation. The chain is UDP-N-acetylmuramate--L-alanine ligase from Roseobacter denitrificans (strain ATCC 33942 / OCh 114) (Erythrobacter sp. (strain OCh 114)).